Reading from the N-terminus, the 64-residue chain is Large ribosomal subunit protein uL29 (64 aa).

This sequence belongs to the universal ribosomal protein uL29 family.

This Burkholderia mallei (strain NCTC 10247) protein is Large ribosomal subunit protein uL29.